The chain runs to 285 residues: Putative ankyrin repeat protein R551 (285 aa).

ANK repeat units follow at residues 99 to 129 (DLKS…PIKI), 157 to 186 (NDFD…LQDE), 188 to 214 (IGKI…EAFR), and 215 to 249 (SAPD…CIQQ).

The protein is Putative ankyrin repeat protein R551 of Acanthamoeba polyphaga (Amoeba).